The primary structure comprises 284 residues: BTB/POZ domain-containing protein 2 (284 aa).

Residues 37 to 108 enclose the BTB domain; it reads SDTTLIIKGE…LYCDSPRIPA (72 aa).

Interacts with cul3.

It localises to the cytoplasm. The protein resides in the nucleus. The protein operates within protein modification; protein ubiquitination. Probable substrate-specific adapter of an E3 ubiquitin-protein ligase complex which mediates the ubiquitination and subsequent proteasomal degradation of target proteins. This is BTB/POZ domain-containing protein 2 (btb2) from Schizosaccharomyces pombe (strain 972 / ATCC 24843) (Fission yeast).